The chain runs to 630 residues: tRNA uridine 5-carboxymethylaminomethyl modification enzyme MnmG (630 aa).

13–18 (GGGHAG) lines the FAD pocket. Position 273 to 287 (273 to 287 (GPRYCPSIEDKVMRF)) interacts with NAD(+).

The protein belongs to the MnmG family. In terms of assembly, homodimer. Heterotetramer of two MnmE and two MnmG subunits. The cofactor is FAD.

It is found in the cytoplasm. NAD-binding protein involved in the addition of a carboxymethylaminomethyl (cmnm) group at the wobble position (U34) of certain tRNAs, forming tRNA-cmnm(5)s(2)U34. In Actinobacillus pleuropneumoniae serotype 3 (strain JL03), this protein is tRNA uridine 5-carboxymethylaminomethyl modification enzyme MnmG.